The chain runs to 147 residues: Hemoglobin subunit delta (147 aa).

The 145-residue stretch at 3-147 (HLTPEEKAAV…VATALAHKYH (145 aa)) folds into the Globin domain. His-64 and His-93 together coordinate heme b.

The protein belongs to the globin family. In terms of assembly, heterotetramer of two delta chains and two alpha chains. Red blood cells.

This Ateles geoffroyi (Black-handed spider monkey) protein is Hemoglobin subunit delta (HBD).